Here is a 513-residue protein sequence, read N- to C-terminus: ATP synthase subunit alpha (513 aa).

169-176 provides a ligand contact to ATP; the sequence is GDRQTGKT.

This sequence belongs to the ATPase alpha/beta chains family. As to quaternary structure, F-type ATPases have 2 components, CF(1) - the catalytic core - and CF(0) - the membrane proton channel. CF(1) has five subunits: alpha(3), beta(3), gamma(1), delta(1), epsilon(1). CF(0) has three main subunits: a(1), b(2) and c(9-12). The alpha and beta chains form an alternating ring which encloses part of the gamma chain. CF(1) is attached to CF(0) by a central stalk formed by the gamma and epsilon chains, while a peripheral stalk is formed by the delta and b chains.

The protein localises to the cell inner membrane. It catalyses the reaction ATP + H2O + 4 H(+)(in) = ADP + phosphate + 5 H(+)(out). Produces ATP from ADP in the presence of a proton gradient across the membrane. The alpha chain is a regulatory subunit. This chain is ATP synthase subunit alpha, found in Mannheimia succiniciproducens (strain KCTC 0769BP / MBEL55E).